Here is a 289-residue protein sequence, read N- to C-terminus: UPF0276 protein BP2925 (289 aa).

This sequence belongs to the UPF0276 family.

The polypeptide is UPF0276 protein BP2925 (Bordetella pertussis (strain Tohama I / ATCC BAA-589 / NCTC 13251)).